The sequence spans 130 residues: Small ribosomal subunit protein uS8 (130 aa).

It belongs to the universal ribosomal protein uS8 family. Part of the 30S ribosomal subunit.

In terms of biological role, one of the primary rRNA binding proteins, it binds directly to 16S rRNA central domain where it helps coordinate assembly of the platform of the 30S subunit. The protein is Small ribosomal subunit protein uS8 of Methanococcus maripaludis (strain C5 / ATCC BAA-1333).